The following is a 500-amino-acid chain: ATP synthase subunit alpha, sodium ion specific (500 aa).

169 to 176 lines the ATP pocket; that stretch reads GDRQTGKT.

It belongs to the ATPase alpha/beta chains family. In terms of assembly, F-type ATPases have 2 components, CF(1) - the catalytic core - and CF(0) - the membrane proton channel. CF(1) has five subunits: alpha(3), beta(3), gamma(1), delta(1), epsilon(1). CF(0) has three main subunits: a, b and c.

It is found in the cell membrane. It carries out the reaction 4 Na(+)(in) + ATP + H2O = 4 Na(+)(out) + ADP + phosphate + H(+). Functionally, produces ATP from ADP in the presence of a sodium ion gradient across the membrane. The alpha chain is a regulatory subunit. This is ATP synthase subunit alpha, sodium ion specific from Propionigenium modestum.